Reading from the N-terminus, the 325-residue chain is Plasminogen (325 aa).

Kringle domains lie at 80 to 146 (ACVK…VPSC) and 159 to 217 (LTPA…VLSV). 4 disulfide bridges follow: C81/C146, C102/C135, C124/C141, and C188/C212.

The protein belongs to the peptidase S1 family. Plasminogen subfamily.

The protein resides in the secreted. The catalysed reaction is Preferential cleavage: Lys-|-Xaa &gt; Arg-|-Xaa, higher selectivity than trypsin. Converts fibrin into soluble products.. Functionally, plasmin dissolves the fibrin of blood clots and acts as a proteolytic factor in a variety of other processes including embryonic development, tissue remodeling, tumor invasion, and inflammation. This is Plasminogen from Petromyzon marinus (Sea lamprey).